The primary structure comprises 409 residues: Probable beta-1,3-galactosyltransferase 3 (409 aa).

Residues 20-42 (WTFLLCFGSFCFGILFTDRMWII) traverse the membrane as a helical; Signal-anchor for type II membrane protein segment.

Belongs to the glycosyltransferase 31 family. Mn(2+) is required as a cofactor.

It localises to the golgi apparatus membrane. It participates in protein modification; protein glycosylation. Its function is as follows. Beta-1,3-galactosyltransferase that transfers galactose from UDP-galactose to substrates with a terminal glycosyl residue. This is Probable beta-1,3-galactosyltransferase 3 (B3GALT3) from Arabidopsis thaliana (Mouse-ear cress).